The primary structure comprises 429 residues: Growth/differentiation factor 2 (429 aa).

Positions 1–22 are cleaved as a signal peptide; sequence MCPGALWVALPLLSLLAGSLQG. The propeptide occupies 23–319; it reads KPLQSWGRGS…AGSTLARRKR (297 aa). N-linked (GlcNAc...) asparagine glycans are attached at residues asparagine 71 and asparagine 136. Residues 283–301 show a composition bias toward basic and acidic residues; sequence VLKKLSKDGSTEAGESSHE. A disordered region spans residues 283–308; that stretch reads VLKKLSKDGSTEAGESSHEEDTDGHV. 3 disulfides stabilise this stretch: cysteine 327–cysteine 393, cysteine 356–cysteine 426, and cysteine 360–cysteine 428. The tract at residues 402–416 is interaction with ENG; the sequence is SVLYKDDMGVPTLKY.

Belongs to the TGF-beta family. As to quaternary structure, homodimer; disulfide-linked. Detected in extracellular fluid as mature homodimer, and in complex with its propeptide. Interacts with ACVRL1, BMPR2 and ACVR2B with high affinity (in vitro). Identified in a complex with ACVRL1 and ACVR2B. Has ten times lower affinity for ACVR2A (in vitro). Interacts with ENG, forming a heterotetramer with a 2:2 stoichiometry. Can form a heteromeric complex with ENG and ACVRL1. Interacts with type I receptor ACVR1. In terms of processing, a reversible disulfide bond can be formed between the two subunits in the homodimer; this has no effect on GDF2 activity. In terms of tissue distribution, detected in blood plasma (at protein level).

It is found in the secreted. Functionally, potent circulating inhibitor of angiogenesis. Signals through the type I activin receptor ACVRL1 but not other Alks. Signaling through SMAD1 in endothelial cells requires TGF-beta coreceptor endoglin/ENG. In Homo sapiens (Human), this protein is Growth/differentiation factor 2 (GDF2).